Consider the following 368-residue polypeptide: Epoxyqueuosine reductase QueH (368 aa).

[4Fe-4S] cluster is bound by residues C6, C7, C87, and C90. C174 and C176 form a disulfide bridge.

The protein belongs to the QueH family.

It carries out the reaction epoxyqueuosine(34) in tRNA + AH2 = queuosine(34) in tRNA + A + H2O. Its pathway is tRNA modification; tRNA-queuosine biosynthesis. Its function is as follows. Catalyzes the conversion of epoxyqueuosine (oQ) to queuosine (Q), which is a hypermodified base found in the wobble positions of tRNA(Asp), tRNA(Asn), tRNA(His) and tRNA(Tyr). This is Epoxyqueuosine reductase QueH from Helicobacter pylori (strain ATCC 700392 / 26695) (Campylobacter pylori).